The primary structure comprises 379 residues: ATP phosphoribosyltransferase regulatory subunit (379 aa).

It belongs to the class-II aminoacyl-tRNA synthetase family. HisZ subfamily. As to quaternary structure, heteromultimer composed of HisG and HisZ subunits.

Its subcellular location is the cytoplasm. Its pathway is amino-acid biosynthesis; L-histidine biosynthesis; L-histidine from 5-phospho-alpha-D-ribose 1-diphosphate: step 1/9. Functionally, required for the first step of histidine biosynthesis. May allow the feedback regulation of ATP phosphoribosyltransferase activity by histidine. This chain is ATP phosphoribosyltransferase regulatory subunit, found in Sinorhizobium fredii (strain NBRC 101917 / NGR234).